The following is a 690-amino-acid chain: Proprotein convertase subtilisin/kexin type 9 (690 aa).

A signal peptide spans 1-28; it reads MGTVRSRRLWWPLPLLLLLLLGPAGARA. Positions 29 to 150 are excised as a propeptide; sequence QEDDDGDYEE…IEEDSYVFAQ (122 aa). Tyr36 bears the Sulfotyrosine mark. Ser45 carries the post-translational modification Phosphoserine. The region spanning 75–147 is the Inhibitor I9 domain; that stretch reads TYVVVLKEET…VDYIEEDSYV (73 aa). Residues 153-459 enclose the Peptidase S8 domain; that stretch reads PWNLERITPA…GWQLFCRTVW (307 aa). Catalysis depends on charge relay system residues Asp184 and His224. 2 cysteine pairs are disulfide-bonded: Cys221–Cys253 and Cys321–Cys356. Ser384 functions as the Charge relay system in the catalytic mechanism. Residues 448 to 690 form a C-terminal domain region; the sequence is GAGWQLFCRT…HLAQASQELQ (243 aa). 3 disulfides stabilise this stretch: Cys455–Cys525, Cys475–Cys524, and Cys484–Cys507. N-linked (GlcNAc...) asparagine glycosylation is present at Asn531. Cystine bridges form between Cys532–Cys599, Cys550–Cys598, Cys560–Cys586, Cys606–Cys677, Cys624–Cys676, and Cys633–Cys652. At Ser686 the chain carries Phosphoserine.

Belongs to the peptidase S8 family. Monomer. Can self-associate to form dimers and higher multimers which may have increased LDLR degrading activity. The precursor protein but not the mature protein may form multimers. Interacts with APOB, VLDLR, LRP8/APOER2 and BACE1. The full-length immature form (pro-PCSK9) interacts with SCNN1A, SCNN1B and SCNN1G. The pro-PCSK9 form (via C-terminal domain) interacts with LDLR. Interacts (via the C-terminal domain) with ANXA2 (via repeat Annexin 1); the interaction inhibits the degradation of LDLR. The cofactor is Ca(2+). Post-translationally, cleavage by furin and PCSK5 generates a truncated inactive protein that is unable to induce LDLR degradation. In terms of processing, undergoes autocatalytic cleavage in the endoplasmic reticulum to release the propeptide from the N-terminus and the cleavage of the propeptide is strictly required for its maturation and activation. The cleaved propeptide however remains associated with the catalytic domain through non-covalent interactions, preventing potential substrates from accessing its active site. As a result, it is secreted from cells as a propeptide-containing, enzymatically inactive protein. Phosphorylation protects the propeptide against proteolysis.

The protein localises to the cytoplasm. The protein resides in the secreted. Its subcellular location is the endosome. It localises to the lysosome. It is found in the cell surface. The protein localises to the endoplasmic reticulum. The protein resides in the golgi apparatus. Its proteolytic activity is autoinhibited by the non-covalent binding of the propeptide to the catalytic domain. Inhibited by EGTA. Crucial player in the regulation of plasma cholesterol homeostasis. Binds to low-density lipid receptor family members: low density lipoprotein receptor (LDLR), very low density lipoprotein receptor (VLDLR), apolipoprotein E receptor (LRP1/APOER) and apolipoprotein receptor 2 (LRP8/APOER2), and promotes their degradation in intracellular acidic compartments. Acts via a non-proteolytic mechanism to enhance the degradation of the hepatic LDLR through a clathrin LDLRAP1/ARH-mediated pathway. May prevent the recycling of LDLR from endosomes to the cell surface or direct it to lysosomes for degradation. Can induce ubiquitination of LDLR leading to its subsequent degradation. Inhibits intracellular degradation of APOB via the autophagosome/lysosome pathway in a LDLR-independent manner. Involved in the disposal of non-acetylated intermediates of BACE1 in the early secretory pathway. Inhibits epithelial Na(+) channel (ENaC)-mediated Na(+) absorption by reducing ENaC surface expression primarily by increasing its proteasomal degradation. Regulates neuronal apoptosis via modulation of LRP8/APOER2 levels and related anti-apoptotic signaling pathways. This chain is Proprotein convertase subtilisin/kexin type 9 (PCSK9), found in Lagothrix lagotricha (Brown woolly monkey).